A 481-amino-acid polypeptide reads, in one-letter code: Vanillin dehydrogenase (481 aa).

NAD(+) is bound at residue 228-233 (GSTHVG). Residues Glu250 and Cys284 contribute to the active site.

The protein belongs to the aldehyde dehydrogenase family.

The catalysed reaction is vanillin + NAD(+) + H2O = vanillate + NADH + 2 H(+). Its function is as follows. Catalyzes the NAD-dependent oxidation of vanillin to vanillic acid. This is Vanillin dehydrogenase (vdh) from Pseudomonas sp. (strain HR199 / DSM 7063).